The chain runs to 97 residues: Coiled-coil domain-containing protein 167 (97 aa).

A coiled-coil region spans residues 36–80 (LRKMELTEEGRKSLEKEKSSLSSRLSNYERELKSLRHENRKNMLL). The helical transmembrane segment at 78–95 (MLLSVAIFLLFAVGYYCW) threads the bilayer.

It localises to the membrane. This is Coiled-coil domain-containing protein 167 (ccdc167) from Xenopus tropicalis (Western clawed frog).